Consider the following 473-residue polypeptide: MIDSGHLRLHDTVAGAVRDFVPLRAGHVSIYLCGATVQGQPHIGHVRSGVAFDILRRWLMARGYDVAFIRNVTDIDDKILNKAAAAGRPWWEWAATHERAFTAAYDALDVLPPSAEPRATGHITQMIELIELLIETGHAYTGGSDVYFDVLSYPDYGQLSGHKMDYIHQGEGVTTGKRDQRDFTLWKGAKSGEPSWPTPWGRGRPGWHLECSAMARAYLGSEFDIHCGGMDLVFPHHENEIAQSRAVGDGFARYWLHNGWVTMGGEKMSKSLGNVLSIPAVLQRVRPAELRYYLGSAHYRSMLEFSEAALQDAVKAYVGVENFLTRVRTRVGAVGTGELTPRFAAALDDDLAVPIALAEVHHARVEGNRALDIGDHEGALTNAGAIRAMMGILGCDPLDERWESRDETSAALAAVDVLVAAELESRQMAREQRNWVLADQIRDRLKDAGIEVTDTVNGPQWELLAGDKQVDAR.

Zn(2+) is bound at residue Cys-33. Residues 35-45 (ATVQGQPHIGH) carry the 'HIGH' region motif. Zn(2+)-binding residues include Cys-211, His-236, and Glu-240. The 'KMSKS' region signature appears at 267–271 (KMSKS). An ATP-binding site is contributed by Lys-270.

The protein belongs to the class-I aminoacyl-tRNA synthetase family. As to quaternary structure, monomer. It depends on Zn(2+) as a cofactor.

Its subcellular location is the cytoplasm. The enzyme catalyses tRNA(Cys) + L-cysteine + ATP = L-cysteinyl-tRNA(Cys) + AMP + diphosphate. This chain is Cysteine--tRNA ligase, found in Mycobacterium leprae (strain Br4923).